The sequence spans 116 residues: Large ribosomal subunit protein uL18 (116 aa).

Belongs to the universal ribosomal protein uL18 family. Part of the 50S ribosomal subunit; part of the 5S rRNA/L5/L18/L25 subcomplex. Contacts the 5S and 23S rRNAs.

Functionally, this is one of the proteins that bind and probably mediate the attachment of the 5S RNA into the large ribosomal subunit, where it forms part of the central protuberance. In Ectopseudomonas mendocina (strain ymp) (Pseudomonas mendocina), this protein is Large ribosomal subunit protein uL18.